Reading from the N-terminus, the 343-residue chain is MDGDLRGDTVHIGGDARQRFHDARGYGYPLGGNDIAVSLVEAAHLLFRGDLDSVDGMGFRAFLTDREAGFAARFLVYVDLRDRGFYLVPDRDPWWRDPGDGDFVVFPRGNTRRDGVVKHRVRVVDERTTLPVDGLSESVLAVVDEESEITYLDIAPETPTGETTLDRPTDVPGVLLDDRVLVWEPPQRLHNAGFYGQPLGGRAADHDALQLSLVEAAYLIDAGVLRLTDATIDDVRARGRLGEGEHFDCRLAVYRALRDAGAVPKTGFKFGADFRVYSAVSSVDDLGHSELLVRVITDTHVFSPGDLSLDVRLAHGVRKRMVFAATDDTDDTIRWLSVSRLTP.

Active-site residues include Tyr-277, His-288, and Lys-319.

Belongs to the tRNA-intron endonuclease family. Archaeal long subfamily. Homodimer.

The catalysed reaction is pretRNA = a 3'-half-tRNA molecule with a 5'-OH end + a 5'-half-tRNA molecule with a 2',3'-cyclic phosphate end + an intron with a 2',3'-cyclic phosphate and a 5'-hydroxyl terminus.. Endonuclease that removes tRNA introns. Cleaves pre-tRNA at the 5' and 3' splice sites to release the intron. The products are an intron and two tRNA half-molecules bearing 2',3' cyclic phosphate and 5'-OH termini. Recognizes a pseudosymmetric substrate in which 2 bulged loops of 3 bases are separated by a stem of 4 bp. This is tRNA-splicing endonuclease from Halobacterium salinarum (strain ATCC 29341 / DSM 671 / R1).